The following is a 215-amino-acid chain: Imidazole glycerol phosphate synthase subunit HisH (215 aa).

A Glutamine amidotransferase type-1 domain is found at 3–215 (TAVVFDYGFG…QLLKNWIATL (213 aa)). Cys-81 (nucleophile) is an active-site residue. Residues His-196 and Glu-198 contribute to the active site.

Heterodimer of HisH and HisF.

It is found in the cytoplasm. The enzyme catalyses 5-[(5-phospho-1-deoxy-D-ribulos-1-ylimino)methylamino]-1-(5-phospho-beta-D-ribosyl)imidazole-4-carboxamide + L-glutamine = D-erythro-1-(imidazol-4-yl)glycerol 3-phosphate + 5-amino-1-(5-phospho-beta-D-ribosyl)imidazole-4-carboxamide + L-glutamate + H(+). The catalysed reaction is L-glutamine + H2O = L-glutamate + NH4(+). The protein operates within amino-acid biosynthesis; L-histidine biosynthesis; L-histidine from 5-phospho-alpha-D-ribose 1-diphosphate: step 5/9. IGPS catalyzes the conversion of PRFAR and glutamine to IGP, AICAR and glutamate. The HisH subunit catalyzes the hydrolysis of glutamine to glutamate and ammonia as part of the synthesis of IGP and AICAR. The resulting ammonia molecule is channeled to the active site of HisF. This is Imidazole glycerol phosphate synthase subunit HisH from Bifidobacterium longum (strain NCC 2705).